The chain runs to 492 residues: N-succinylglutamate 5-semialdehyde dehydrogenase (492 aa).

Residue 220 to 225 (GRANTG) participates in NAD(+) binding. Residues Glu-243 and Cys-277 contribute to the active site.

Belongs to the aldehyde dehydrogenase family. AstD subfamily.

The catalysed reaction is N-succinyl-L-glutamate 5-semialdehyde + NAD(+) + H2O = N-succinyl-L-glutamate + NADH + 2 H(+). Its pathway is amino-acid degradation; L-arginine degradation via AST pathway; L-glutamate and succinate from L-arginine: step 4/5. Its function is as follows. Catalyzes the NAD-dependent reduction of succinylglutamate semialdehyde into succinylglutamate. The polypeptide is N-succinylglutamate 5-semialdehyde dehydrogenase (Shigella boydii serotype 4 (strain Sb227)).